Here is an 867-residue protein sequence, read N- to C-terminus: Cadherin-related family member 1 (867 aa).

Residues 1-21 (MGRGPPAVLAPWMLFLSLAQA) form the signal peptide. The Extracellular segment spans residues 22-701 (NFAPHFFDNG…LMQTKDNPMK (680 aa)). Cadherin domains lie at 36–135 (NGNM…APRF), 136–247 (IQEP…GPVF), 248–354 (VGTP…PPTF), 360–473 (PQNR…VPKF), 474–577 (TSHY…YPQF), and 574–689 (YPQF…SPMA). 2 N-linked (GlcNAc...) asparagine glycosylation sites follow: Asn58 and Asn89. Residues Asn288 and Asn297 are each glycosylated (N-linked (GlcNAc...) asparagine). The helical transmembrane segment at 702-722 (AVGVLAGIMAIIVAITVLIST) threads the bilayer. The Cytoplasmic portion of the chain corresponds to 723–867 (ATFWRNKKSN…KKNLHSKAYF (145 aa)). Positions 767 to 843 (KFVLREAPPN…VAKRKAVGSP (77 aa)) are disordered. A compositionally biased stretch (polar residues) spans 777 to 786 (ENCNNNSRGS). Residues 790-802 (PQAPAPPPPPSPA) show a composition bias toward pro residues.

As to quaternary structure, interacts with PROM1. In terms of processing, undergoes proteolytic cleavage; produces a soluble 95 kDa N-terminal fragment and a 25 kDa cell-associated C-terminal fragment. Expressed in photoreceptor cells of the outer nuclear layer of the retina.

Its subcellular location is the cell membrane. In terms of biological role, potential calcium-dependent cell-adhesion protein. May be required for the structural integrity of the outer segment (OS) of photoreceptor cells. The chain is Cadherin-related family member 1 (CDHR1) from Bos taurus (Bovine).